A 247-amino-acid polypeptide reads, in one-letter code: Triosephosphate isomerase (247 aa).

9 to 11 (NWK) provides a ligand contact to substrate. The active-site Electrophile is His93. The Proton acceptor role is filled by Glu163. Residues Gly169, Ser209, and 230-231 (GG) contribute to the substrate site.

Belongs to the triosephosphate isomerase family. In terms of assembly, homodimer.

It is found in the cytoplasm. The enzyme catalyses D-glyceraldehyde 3-phosphate = dihydroxyacetone phosphate. The protein operates within carbohydrate biosynthesis; gluconeogenesis. It participates in carbohydrate degradation; glycolysis; D-glyceraldehyde 3-phosphate from glycerone phosphate: step 1/1. In terms of biological role, involved in the gluconeogenesis. Catalyzes stereospecifically the conversion of dihydroxyacetone phosphate (DHAP) to D-glyceraldehyde-3-phosphate (G3P). This chain is Triosephosphate isomerase, found in Dinoroseobacter shibae (strain DSM 16493 / NCIMB 14021 / DFL 12).